A 176-amino-acid chain; its full sequence is 2-C-methyl-D-erythritol 2,4-cyclodiphosphate synthase (176 aa).

A divalent metal cation contacts are provided by Asp23, His25, and His60. A 4-CDP-2-C-methyl-D-erythritol 2-phosphate-binding site is contributed by 23 to 25 (DSH). 149–152 (TSGE) provides a ligand contact to 4-CDP-2-C-methyl-D-erythritol 2-phosphate.

It belongs to the IspF family. As to quaternary structure, homotrimer. A divalent metal cation serves as cofactor.

It carries out the reaction 4-CDP-2-C-methyl-D-erythritol 2-phosphate = 2-C-methyl-D-erythritol 2,4-cyclic diphosphate + CMP. It participates in isoprenoid biosynthesis; isopentenyl diphosphate biosynthesis via DXP pathway; isopentenyl diphosphate from 1-deoxy-D-xylulose 5-phosphate: step 4/6. Involved in the biosynthesis of isopentenyl diphosphate (IPP) and dimethylallyl diphosphate (DMAPP), two major building blocks of isoprenoid compounds. Catalyzes the conversion of 4-diphosphocytidyl-2-C-methyl-D-erythritol 2-phosphate (CDP-ME2P) to 2-C-methyl-D-erythritol 2,4-cyclodiphosphate (ME-CPP) with a corresponding release of cytidine 5-monophosphate (CMP). The protein is 2-C-methyl-D-erythritol 2,4-cyclodiphosphate synthase of Chlamydia abortus (strain DSM 27085 / S26/3) (Chlamydophila abortus).